We begin with the raw amino-acid sequence, 380 residues long: Cytochrome b (380 aa).

4 helical membrane passes run 34-54 (FGSL…LLAM), 78-99 (WLIR…FLHI), 114-134 (WNTG…GYVL), and 179-199 (FFAL…IHLT). The heme b site is built by His84 and His98. Residues His183 and His197 each contribute to the heme b site. An a ubiquinone-binding site is contributed by His202. A run of 4 helical transmembrane segments spans residues 227–247 (IKDI…ALFS), 289–309 (LGGV…PFLH), 321–341 (LSQT…WIGS), and 348–368 (FIII…ILFP).

The protein belongs to the cytochrome b family. The cytochrome bc1 complex contains 11 subunits: 3 respiratory subunits (MT-CYB, CYC1 and UQCRFS1), 2 core proteins (UQCRC1 and UQCRC2) and 6 low-molecular weight proteins (UQCRH/QCR6, UQCRB/QCR7, UQCRQ/QCR8, UQCR10/QCR9, UQCR11/QCR10 and a cleavage product of UQCRFS1). This cytochrome bc1 complex then forms a dimer. Heme b is required as a cofactor.

The protein resides in the mitochondrion inner membrane. Component of the ubiquinol-cytochrome c reductase complex (complex III or cytochrome b-c1 complex) that is part of the mitochondrial respiratory chain. The b-c1 complex mediates electron transfer from ubiquinol to cytochrome c. Contributes to the generation of a proton gradient across the mitochondrial membrane that is then used for ATP synthesis. In Alectoris rufa (Red-legged partridge), this protein is Cytochrome b (MT-CYB).